The primary structure comprises 151 residues: Large ribosomal subunit protein bL9 (151 aa).

It belongs to the bacterial ribosomal protein bL9 family.

In terms of biological role, binds to the 23S rRNA. The protein is Large ribosomal subunit protein bL9 of Pelodictyon phaeoclathratiforme (strain DSM 5477 / BU-1).